The sequence spans 229 residues: 2-C-methyl-D-erythritol 4-phosphate cytidylyltransferase (229 aa).

Belongs to the IspD/TarI cytidylyltransferase family. IspD subfamily.

It catalyses the reaction 2-C-methyl-D-erythritol 4-phosphate + CTP + H(+) = 4-CDP-2-C-methyl-D-erythritol + diphosphate. It functions in the pathway isoprenoid biosynthesis; isopentenyl diphosphate biosynthesis via DXP pathway; isopentenyl diphosphate from 1-deoxy-D-xylulose 5-phosphate: step 2/6. Functionally, catalyzes the formation of 4-diphosphocytidyl-2-C-methyl-D-erythritol from CTP and 2-C-methyl-D-erythritol 4-phosphate (MEP). The polypeptide is 2-C-methyl-D-erythritol 4-phosphate cytidylyltransferase (Neisseria gonorrhoeae (strain NCCP11945)).